Consider the following 188-residue polypeptide: MKASEMKKGSIVEYNNGTYQIRDIQRSSPQGRGGNVRFRFVMYSVPGGSKLEASFDADEMLTAVELLRREASFSYKDGEAFVFLDEEDYTLYTLEAEAIGDNAGYISEGLSGCYVQLIDASPVALQLPQHVVLEVVDTPPELKGGTATKRPKPAKLITGIEVMVPEYITTGERILVNTTTGAFGGRAS.

The protein belongs to the elongation factor P family.

The protein is Elongation factor P-like protein of Xylella fastidiosa (strain 9a5c).